We begin with the raw amino-acid sequence, 633 residues long: Glutamyl-tRNA(Gln) amidotransferase subunit E (633 aa).

It belongs to the GatB/GatE family. GatE subfamily. Heterodimer of GatD and GatE.

It catalyses the reaction L-glutamyl-tRNA(Gln) + L-glutamine + ATP + H2O = L-glutaminyl-tRNA(Gln) + L-glutamate + ADP + phosphate + H(+). Allows the formation of correctly charged Gln-tRNA(Gln) through the transamidation of misacylated Glu-tRNA(Gln) in organisms which lack glutaminyl-tRNA synthetase. The reaction takes place in the presence of glutamine and ATP through an activated gamma-phospho-Glu-tRNA(Gln). The GatDE system is specific for glutamate and does not act on aspartate. In Methanosarcina acetivorans (strain ATCC 35395 / DSM 2834 / JCM 12185 / C2A), this protein is Glutamyl-tRNA(Gln) amidotransferase subunit E.